A 257-amino-acid polypeptide reads, in one-letter code: Transcription factor MYB4 (257 aa).

2 consecutive HTH myb-type domains span residues 9 to 61 (KMGL…INYL) and 62 to 116 (RPDI…KKRL). 2 consecutive DNA-binding regions (H-T-H motif) follow at residues 37-61 (WRALPKQAGLLRCGKSCRLRWINYL) and 89-112 (WSAIAARLPGRTDNEIKNVWHTHL). Residues 115 to 179 (RLDAPAQGGH…VAEEHGNAGI (65 aa)) form a disordered region. A compositionally biased stretch (basic residues) spans 130 to 140 (GKKHKKPKSAK). A compositionally biased stretch (low complexity) spans 141-170 (KPAAAAAAPPASPERSASSSVTESSMASSV).

The protein resides in the nucleus. Its function is as follows. Transcriptional activator involved in cold stress response. Regulates positively the expression of genes involved in reactive oxygen species (ROS) scavenging such as peroxidase and superoxide dismutase during cold stress. Transactivates a complex gene network that have major effects on stress tolerance and panicle development. In Oryza sativa subsp. japonica (Rice), this protein is Transcription factor MYB4.